The following is a 363-amino-acid chain: Circumsporozoite protein (363 aa).

The N-terminal stretch at Met1 to Phe22 is a signal peptide. Residues Gly48 to Ser57 show a composition bias toward polar residues. The disordered stretch occupies residues Gly48 to Pro278. Residues Gly61–Gln96 are compositionally biased toward basic and acidic residues. The interval Lys80–Lys88 is required for the binding to heparan sulfate proteoglycans (HSPGs) on the surface of host hepatocytes. The tract at residues Lys93–Pro97 is region I; contains the proteolytic cleavage site. The 1; approximate repeat unit spans residues Asn98–Ala109. A 12 X 12 AA approximate tandem repeats of N-A-G-Q-P-Q-A-Q-G-D-G-A region spans residues Asn98–Ala241. Tandem repeats lie at residues Asn110–Ala121, Asn122–Ala133, Asn134–Ala145, Asn146–Ala157, Asn158–Ala169, Asn170–Ala181, Asn182–Ala193, Asn194–Ala205, Asn206–Ala217, Asn218–Ala229, and Asn230–Ala241. Residues Arg248–Glu259 show a composition bias toward gly residues. Over residues Gly260 to Ala277 the composition is skewed to low complexity. Residues Lys289–Ala341 form the TSP type-1 domain. Cystine bridges form between Cys301-Cys335 and Cys305-Cys340. An O-linked (Fuc) threonine glycan is attached at Thr304. A lipid anchor (GPI-anchor amidated cysteine) is attached at Cys340. Residues Ala341–Asn363 constitute a propeptide, removed in mature form.

It belongs to the plasmodium circumsporozoite protein family. During host cell invasion, proteolytically cleaved at the cell membrane in the region I by a papain-like cysteine protease of parasite origin. Cleavage is triggered by the sporozoite contact with highly sulfated heparan sulfate proteoglycans (HSPGs) present on the host hepatocyte cell surface. Cleavage exposes the TSP type-1 (TSR) domain and is required for productive invasion of host hepatocytes but not for adhesion to the host cell membrane. Cleavage is dispensable for sporozoite development in the oocyst, motility and for traversal of host and vector cells. Post-translationally, O-glycosylated; maybe by POFUT2.

Its subcellular location is the cell membrane. The protein localises to the cytoplasm. Essential sporozoite protein. In the mosquito vector, required for sporozoite development in the oocyst, migration through the vector hemolymph and entry into the vector salivary glands. In the vertebrate host, required for sporozoite migration through the host dermis and infection of host hepatocytes. Binds to highly sulfated heparan sulfate proteoglycans (HSPGs) on the surface of host hepatocytes. Functionally, in the vertebrate host, binds to highly sulfated heparan sulfate proteoglycans (HSPGs) on the surface of host hepatocytes and is required for sporozoite invasion of the host hepatocytes. The chain is Circumsporozoite protein from Plasmodium knowlesi (strain H).